We begin with the raw amino-acid sequence, 129 residues long: SOSS complex subunit C homolog (129 aa).

Positions 105–129 (RLEPLPSPATTPTTPNAPPSHSISK) are disordered.

The protein belongs to the SOSS-C family.

This chain is SOSS complex subunit C homolog, found in Drosophila simulans (Fruit fly).